Here is a 475-residue protein sequence, read N- to C-terminus: Dihydrolipoyl dehydrogenase (475 aa).

Residues 36–45 (ERYSTLGGVC), lysine 54, and glycine 117 contribute to the FAD site. Cysteine 45 and cysteine 50 form a disulfide bridge. Residues 182-186 (GGGII), glutamate 205, valine 238, and 270-273 (AIGR) each bind NAD(+). Aspartate 313 and alanine 321 together coordinate FAD. Histidine 445 functions as the Proton acceptor in the catalytic mechanism.

The protein belongs to the class-I pyridine nucleotide-disulfide oxidoreductase family. FAD serves as cofactor.

The protein localises to the cytoplasm. It carries out the reaction N(6)-[(R)-dihydrolipoyl]-L-lysyl-[protein] + NAD(+) = N(6)-[(R)-lipoyl]-L-lysyl-[protein] + NADH + H(+). Functionally, the branched-chain alpha-keto dehydrogenase complex catalyzes the overall conversion of alpha-keto acids to acyl-CoA and CO(2). It contains multiple copies of 3 enzymatic components: branched-chain alpha-keto acid decarboxylase (E1), lipoamide acyltransferase (E2) and lipoamide dehydrogenase (E3). The protein is Dihydrolipoyl dehydrogenase (lpd) of Vibrio parahaemolyticus serotype O3:K6 (strain RIMD 2210633).